Reading from the N-terminus, the 114-residue chain is Iron-sulfur cluster insertion protein ErpA (114 aa).

The iron-sulfur cluster site is built by cysteine 42, cysteine 106, and cysteine 108.

It belongs to the HesB/IscA family. As to quaternary structure, homodimer. The cofactor is iron-sulfur cluster.

Required for insertion of 4Fe-4S clusters for at least IspG. The chain is Iron-sulfur cluster insertion protein ErpA from Salmonella typhi.